Here is a 360-residue protein sequence, read N- to C-terminus: DNA replication and repair protein RecF (360 aa).

30 to 37 lines the ATP pocket; that stretch reads GHNGSGKT.

Belongs to the RecF family.

The protein localises to the cytoplasm. The RecF protein is involved in DNA metabolism; it is required for DNA replication and normal SOS inducibility. RecF binds preferentially to single-stranded, linear DNA. It also seems to bind ATP. The sequence is that of DNA replication and repair protein RecF from Shewanella amazonensis (strain ATCC BAA-1098 / SB2B).